The chain runs to 394 residues: Flap endonuclease 1 (394 aa).

The interval 1 to 103 (MGIKSLYQII…GELAKRTMRK (103 aa)) is N-domain. Asp34 contacts Mg(2+). Arg69 serves as a coordination point for DNA. Asp85 lines the Mg(2+) pocket. The interval 102-123 (RKAEAQEAAEEAKETGTAEDVE) is disordered. An I-domain region spans residues 121–252 (DVEKFSRRTV…NTALKMIRDH (132 aa)). Residues Glu157, Glu159, Asp178, and Asp180 each coordinate Mg(2+). Glu157 lines the DNA pocket. Residues Gly230 and Asp232 each coordinate DNA. Asp232 serves as a coordination point for Mg(2+). The segment at 340–348 (QQSRLEGFF) is interaction with PCNA. The disordered stretch occupies residues 349-394 (KPVAKTEQQKATAKRKAEEKAELAKKKKKEDAKAKRAMGAKPRGAR). The segment covering 363-382 (RKAEEKAELAKKKKKEDAKA) has biased composition (basic and acidic residues). Positions 383 to 394 (KRAMGAKPRGAR) are enriched in basic residues.

It belongs to the XPG/RAD2 endonuclease family. FEN1 subfamily. As to quaternary structure, interacts with PCNA. Three molecules of FEN1 bind to one PCNA trimer with each molecule binding to one PCNA monomer. PCNA stimulates the nuclease activity without altering cleavage specificity. Mg(2+) is required as a cofactor. Phosphorylated. Phosphorylation upon DNA damage induces relocalization to the nuclear plasma.

It localises to the nucleus. It is found in the nucleolus. The protein localises to the nucleoplasm. The protein resides in the mitochondrion. Its function is as follows. Structure-specific nuclease with 5'-flap endonuclease and 5'-3' exonuclease activities involved in DNA replication and repair. During DNA replication, cleaves the 5'-overhanging flap structure that is generated by displacement synthesis when DNA polymerase encounters the 5'-end of a downstream Okazaki fragment. It enters the flap from the 5'-end and then tracks to cleave the flap base, leaving a nick for ligation. Also involved in the long patch base excision repair (LP-BER) pathway, by cleaving within the apurinic/apyrimidinic (AP) site-terminated flap. Acts as a genome stabilization factor that prevents flaps from equilibrating into structures that lead to duplications and deletions. Also possesses 5'-3' exonuclease activity on nicked or gapped double-stranded DNA, and exhibits RNase H activity. Also involved in replication and repair of rDNA and in repairing mitochondrial DNA. The chain is Flap endonuclease 1 from Arthroderma otae (strain ATCC MYA-4605 / CBS 113480) (Microsporum canis).